The chain runs to 1814 residues: U3 small nucleolar RNA-associated protein 10 (1814 aa).

An HEAT 1 repeat occupies 583-620; it reads LDFQALLPFLLVALTDASERVRREAAAALAAVGSLYKK. 2 helical membrane passes run 942-962 and 998-1018; these read IQSGMSYLLSLTLGSLLAIVN and ALLLVAGLSVIAPELVLHSVM. HEAT repeat units lie at residues 1042-1079, 1249-1286, 1293-1331, and 1770-1807; these read QTIDQVVPALIQSLRDQKRDVVSGTSELLLSFTAAFEH, LTLVDFLDTIEVLLERPNDELRRKVLRLLEGRLRQNPE, IRVLDFLPTLVDIIRNSADILLKHAAVACIDRIAEKYGK, and ALLPEMLPYISELMEDEDENVEREVRKWVKQIENVLGE.

The protein belongs to the HEATR1/UTP10 family. In terms of assembly, component of the ribosomal small subunit (SSU) processome.

It localises to the nucleus. The protein localises to the nucleolus. The protein resides in the membrane. In terms of biological role, involved in nucleolar processing of pre-18S ribosomal RNA. Involved in ribosome biosynthesis. The protein is U3 small nucleolar RNA-associated protein 10 of Neosartorya fischeri (strain ATCC 1020 / DSM 3700 / CBS 544.65 / FGSC A1164 / JCM 1740 / NRRL 181 / WB 181) (Aspergillus fischerianus).